Reading from the N-terminus, the 352-residue chain is Glycerol-3-phosphate dehydrogenase [NAD(P)+] (352 aa).

W11, R37, and K112 together coordinate NADPH. Positions 112, 153, and 155 each coordinate sn-glycerol 3-phosphate. Residue A157 coordinates NADPH. Sn-glycerol 3-phosphate is bound by residues K208, D261, S271, R272, and N273. Residue K208 is the Proton acceptor of the active site. Residue R272 coordinates NADPH. The NADPH site is built by V296 and E298.

It belongs to the NAD-dependent glycerol-3-phosphate dehydrogenase family.

It localises to the cytoplasm. It carries out the reaction sn-glycerol 3-phosphate + NAD(+) = dihydroxyacetone phosphate + NADH + H(+). The catalysed reaction is sn-glycerol 3-phosphate + NADP(+) = dihydroxyacetone phosphate + NADPH + H(+). The protein operates within membrane lipid metabolism; glycerophospholipid metabolism. Catalyzes the reduction of the glycolytic intermediate dihydroxyacetone phosphate (DHAP) to sn-glycerol 3-phosphate (G3P), the key precursor for phospholipid synthesis. The protein is Glycerol-3-phosphate dehydrogenase [NAD(P)+] of Polaromonas naphthalenivorans (strain CJ2).